The chain runs to 129 residues: Ubiquinol-cytochrome-c reductase complex assembly factor 2 (129 aa).

Residues 1 to 13 (MSATRYRRFLKLC) constitute a mitochondrion transit peptide.

The protein resides in the mitochondrion matrix. It is found in the mitochondrion nucleoid. The protein localises to the mitochondrion. In terms of biological role, required for the assembly of the ubiquinol-cytochrome c reductase complex (mitochondrial respiratory chain complex III or cytochrome b-c1 complex). May play a role in the modulation of respiratory chain activities such as oxygen consumption and ATP production. May be involved in cytochrome b translation and/or stability. The polypeptide is Ubiquinol-cytochrome-c reductase complex assembly factor 2 (uqcc2) (Danio rerio (Zebrafish)).